The primary structure comprises 166 residues: Cyclic pyranopterin monophosphate synthase (166 aa).

Residues 83–85 (LCH) and 121–122 (ME) contribute to the substrate site. The active site involves Asp136.

This sequence belongs to the MoaC family. Homohexamer; trimer of dimers.

It catalyses the reaction (8S)-3',8-cyclo-7,8-dihydroguanosine 5'-triphosphate = cyclic pyranopterin phosphate + diphosphate. It participates in cofactor biosynthesis; molybdopterin biosynthesis. Catalyzes the conversion of (8S)-3',8-cyclo-7,8-dihydroguanosine 5'-triphosphate to cyclic pyranopterin monophosphate (cPMP). This chain is Cyclic pyranopterin monophosphate synthase, found in Rhodospirillum rubrum (strain ATCC 11170 / ATH 1.1.1 / DSM 467 / LMG 4362 / NCIMB 8255 / S1).